Reading from the N-terminus, the 65-residue chain is Antimicrobial peptide 1 (65 aa).

Residues 1 to 27 (MAKVSSAYLKFALVMILLLSVISAVMS) form the signal peptide. 3 cysteine pairs are disulfide-bonded: C30–C47, C37–C51, and C46–C62.

This sequence belongs to the AMP family. As to expression, seed specific.

The protein resides in the secreted. Its function is as follows. Possesses antifungal activity. The chain is Antimicrobial peptide 1 from Phytolacca americana (American pokeweed).